The following is a 156-amino-acid chain: Phosphopantetheine adenylyltransferase (156 aa).

Threonine 9 contacts substrate. Residues 9–10 (TF) and histidine 17 each bind ATP. The substrate site is built by lysine 41, leucine 73, and arginine 87. ATP is bound by residues 88–90 (GVR), glutamate 98, and 123–129 (WAFVSST).

The protein belongs to the bacterial CoaD family. As to quaternary structure, homohexamer. Mg(2+) serves as cofactor.

Its subcellular location is the cytoplasm. It carries out the reaction (R)-4'-phosphopantetheine + ATP + H(+) = 3'-dephospho-CoA + diphosphate. It functions in the pathway cofactor biosynthesis; coenzyme A biosynthesis; CoA from (R)-pantothenate: step 4/5. In terms of biological role, reversibly transfers an adenylyl group from ATP to 4'-phosphopantetheine, yielding dephospho-CoA (dPCoA) and pyrophosphate. This is Phosphopantetheine adenylyltransferase from Haemophilus influenzae (strain ATCC 51907 / DSM 11121 / KW20 / Rd).